Here is a 156-residue protein sequence, read N- to C-terminus: Small ribosomal subunit protein uS7 (156 aa).

Belongs to the universal ribosomal protein uS7 family. As to quaternary structure, part of the 30S ribosomal subunit. Contacts proteins S9 and S11.

One of the primary rRNA binding proteins, it binds directly to 16S rRNA where it nucleates assembly of the head domain of the 30S subunit. Is located at the subunit interface close to the decoding center, probably blocks exit of the E-site tRNA. In Streptomyces coelicolor (strain ATCC BAA-471 / A3(2) / M145), this protein is Small ribosomal subunit protein uS7 (rspG).